A 375-amino-acid polypeptide reads, in one-letter code: Alcohol dehydrogenase 1 (375 aa).

Ser1 carries the post-translational modification N-acetylserine. Residues Cys46, His67, Cys97, Cys100, Cys103, Cys111, and Cys175 each coordinate Zn(2+). NAD(+)-binding positions include 200 to 205 (GLGGVG), Asp224, Lys229, 293 to 295 (VGV), and Arg370.

This sequence belongs to the zinc-containing alcohol dehydrogenase family. Class-I subfamily. In terms of assembly, homodimer. Zn(2+) is required as a cofactor.

The protein localises to the cytoplasm. It catalyses the reaction a primary alcohol + NAD(+) = an aldehyde + NADH + H(+). The enzyme catalyses a secondary alcohol + NAD(+) = a ketone + NADH + H(+). This chain is Alcohol dehydrogenase 1 (ADH1), found in Coturnix japonica (Japanese quail).